The following is a 397-amino-acid chain: Pectate lyase 4 (397 aa).

Residues 1-25 (MGIKHCCYILYFTLALVTLVQAGRL) form the signal peptide. Asn-36 is a glycosylation site (N-linked (GlcNAc...) asparagine). Cys-54 and Cys-71 form a disulfide bridge. PbH1 repeat units follow at residues 159–202 (VKNV…HVTG), 203–224 (SSDI…VDVN), and 227–248 (STGV…LLGA). Asp-194, Asp-218, and Asp-222 together coordinate Ca(2+). Arg-274 is an active-site residue.

It belongs to the polysaccharide lyase 1 family. Amb a subfamily. In terms of assembly, monomer. Ca(2+) is required as a cofactor. In terms of processing, the N-terminus is blocked. As to expression, pollen and flowers.

It carries out the reaction Eliminative cleavage of (1-&gt;4)-alpha-D-galacturonan to give oligosaccharides with 4-deoxy-alpha-D-galact-4-enuronosyl groups at their non-reducing ends.. It functions in the pathway glycan metabolism; pectin degradation; 2-dehydro-3-deoxy-D-gluconate from pectin: step 2/5. Has pectate lyase activity. This Ambrosia artemisiifolia (Common ragweed) protein is Pectate lyase 4.